We begin with the raw amino-acid sequence, 179 residues long: Large ribosomal subunit protein uL5 (179 aa).

It belongs to the universal ribosomal protein uL5 family. Part of the 50S ribosomal subunit; part of the 5S rRNA/L5/L18/L25 subcomplex. Contacts the 5S rRNA and the P site tRNA. Forms a bridge to the 30S subunit in the 70S ribosome.

In terms of biological role, this is one of the proteins that bind and probably mediate the attachment of the 5S RNA into the large ribosomal subunit, where it forms part of the central protuberance. In the 70S ribosome it contacts protein S13 of the 30S subunit (bridge B1b), connecting the 2 subunits; this bridge is implicated in subunit movement. Contacts the P site tRNA; the 5S rRNA and some of its associated proteins might help stabilize positioning of ribosome-bound tRNAs. This is Large ribosomal subunit protein uL5 from Pseudomonas aeruginosa (strain LESB58).